We begin with the raw amino-acid sequence, 78 residues long: Small ribosomal subunit protein uS19m (78 aa).

Belongs to the universal ribosomal protein uS19 family.

The protein resides in the mitochondrion. The chain is Small ribosomal subunit protein uS19m (RPS19) from Acanthamoeba castellanii (Amoeba).